We begin with the raw amino-acid sequence, 158 residues long: Snaclec stejaggregin-A subunit alpha (158 aa).

A signal peptide spans 1–23 (MGRFISVSFGLLVVFLSLSGTGA). 3 disulfide bridges follow: C27/C38, C55/C152, and C127/C144. One can recognise a C-type lectin domain in the interval 34-153 (YDWYCYKPFN…CQAKNPFVCK (120 aa)).

This sequence belongs to the snaclec family. As to quaternary structure, heteromultimer; disulfide-linked. As to expression, expressed by the venom gland.

It is found in the secreted. In terms of biological role, interferes with one step of hemostasis (modulation of platelet aggregation, or coagulation cascade, for example). This is Snaclec stejaggregin-A subunit alpha from Trimeresurus stejnegeri (Chinese green tree viper).